The primary structure comprises 94 residues: Co-chaperonin GroES (94 aa).

This sequence belongs to the GroES chaperonin family. Heptamer of 7 subunits arranged in a ring. Interacts with the chaperonin GroEL.

Its subcellular location is the cytoplasm. In terms of biological role, together with the chaperonin GroEL, plays an essential role in assisting protein folding. The GroEL-GroES system forms a nano-cage that allows encapsulation of the non-native substrate proteins and provides a physical environment optimized to promote and accelerate protein folding. GroES binds to the apical surface of the GroEL ring, thereby capping the opening of the GroEL channel. The sequence is that of Co-chaperonin GroES from Streptococcus pneumoniae (strain ATCC BAA-255 / R6).